We begin with the raw amino-acid sequence, 120 residues long: NAD(P)H-quinone oxidoreductase subunit 3, chloroplastic (120 aa).

3 helical membrane passes run 9–29 (IFWA…XISG), 64–84 (MFAL…PWAM), and 88–108 (VLGV…IVGL).

Belongs to the complex I subunit 3 family. As to quaternary structure, NDH is composed of at least 16 different subunits, 5 of which are encoded in the nucleus.

It is found in the plastid. It localises to the chloroplast thylakoid membrane. It carries out the reaction a plastoquinone + NADH + (n+1) H(+)(in) = a plastoquinol + NAD(+) + n H(+)(out). It catalyses the reaction a plastoquinone + NADPH + (n+1) H(+)(in) = a plastoquinol + NADP(+) + n H(+)(out). In terms of biological role, NDH shuttles electrons from NAD(P)H:plastoquinone, via FMN and iron-sulfur (Fe-S) centers, to quinones in the photosynthetic chain and possibly in a chloroplast respiratory chain. The immediate electron acceptor for the enzyme in this species is believed to be plastoquinone. Couples the redox reaction to proton translocation, and thus conserves the redox energy in a proton gradient. The polypeptide is NAD(P)H-quinone oxidoreductase subunit 3, chloroplastic (Eucalyptus globulus subsp. globulus (Tasmanian blue gum)).